Consider the following 195-residue polypeptide: Mannitol operon repressor (195 aa).

This sequence belongs to the MtlR/FumE family. As to quaternary structure, homodimer. Can also form higher level multimer aggregates.

Its function is as follows. Involved in the repression of the expression of the mannitol mtlADR operon. Does not bind the operator/promoter regulatory region of this operon. Therefore, seems to belong to a new class of transcription factors in bacteria that may regulate gene expression indirectly, perhaps as a part of a larger transcriptional complex. The sequence is that of Mannitol operon repressor from Escherichia coli O6:H1 (strain CFT073 / ATCC 700928 / UPEC).